A 365-amino-acid polypeptide reads, in one-letter code: Galactoside alpha-(1,2)-fucosyltransferase 1 (365 aa).

Topologically, residues 1 to 8 (MWVPSRRH) are cytoplasmic. The helical; Signal-anchor for type II membrane protein transmembrane segment at 9 to 28 (LCLTFLLVCVLAAIFFLNVY) threads the bilayer. The Lumenal segment spans residues 29–365 (QDLFYSGLDL…LSPLQMLAGP (337 aa)). Residues Asn-65, Asn-301, and Asn-327 are each glycosylated (N-linked (GlcNAc...) asparagine).

It belongs to the glycosyltransferase 11 family.

The protein resides in the golgi apparatus. Its subcellular location is the golgi stack membrane. It carries out the reaction a beta-D-galactosyl-(1-&gt;4)-N-acetyl-beta-D-glucosaminyl derivative + GDP-beta-L-fucose = an alpha-L-Fuc-(1-&gt;2)-beta-D-Gal-(1-&gt;4)-beta-D-GlcNAc derivative + GDP + H(+). It catalyses the reaction a ganglioside GA1 + GDP-beta-L-fucose = a ganglioside Fuc-GA1 + GDP + H(+). The enzyme catalyses a beta-D-Gal-(1-&gt;3)-beta-D-GlcNAc-(1-&gt;3)-beta-D-Gal-(1-&gt;4)-beta-D-Glc-(1&lt;-&gt;1')-Cer(d18:1(4E)) + GDP-beta-L-fucose = alpha-L-fucosyl-(1-&gt;2)- beta-D-galactosyl-(1-&gt;3)-N-acetyl-beta-D-glucosaminyl-(1-&gt;3)-beta-D-galactosyl-(1-&gt;4)-beta-D-glucosyl-(1&lt;-&gt;1')-N-acylsphing-4-enine + GDP + H(+). The catalysed reaction is a neolactoside nLc4Cer(d18:1(4E)) + GDP-beta-L-fucose = a neolactoside IV(2)-alpha-Fuc-nLc4Cer(d18:1(4E)) + GDP + H(+). It carries out the reaction a ganglioside GM1 + GDP-beta-L-fucose = a ganglioside Fuc-GM1 + GDP + H(+). It catalyses the reaction beta-D-galactosyl-(1-&gt;3)-N-acetyl-D-galactosamine + GDP-beta-L-fucose = alpha-L-fucosyl-(1-&gt;2)-beta-D-galactosyl-(1-&gt;3)-N-acetyl-D-galactosamine + GDP + H(+). It functions in the pathway protein modification; protein glycosylation. Its function is as follows. Catalyzes the transfer of L-fucose, from a guanosine diphosphate-beta-L-fucose, to the terminal galactose residue of glycoconjugates through an alpha(1,2) linkage leading to H antigen synthesis that is an intermediate substrate in the synthesis of ABO blood group antigens. H antigen is essential for maturation of the glomerular layer of the main olfactory bulb, in cell migration and early cell-cell contacts during tumor associated angiogenesis. Preferentially fucosylates soluble lactose and to a lesser extent fucosylates glycolipids gangliosides GA1 and GM1a. This Sus scrofa (Pig) protein is Galactoside alpha-(1,2)-fucosyltransferase 1.